The primary structure comprises 283 residues: Phosphate import ATP-binding protein PstB (283 aa).

Over residues Met1–Ser20 the composition is skewed to polar residues. The segment at Met1–Ser32 is disordered. Residues Tyr37–Ile278 enclose the ABC transporter domain. Residue Gly69–Ser76 participates in ATP binding.

The protein belongs to the ABC transporter superfamily. Phosphate importer (TC 3.A.1.7) family. In terms of assembly, the complex is composed of two ATP-binding proteins (PstB), two transmembrane proteins (PstC and PstA) and a solute-binding protein (PstS).

It is found in the cell membrane. The enzyme catalyses phosphate(out) + ATP + H2O = ADP + 2 phosphate(in) + H(+). Its function is as follows. Part of the ABC transporter complex PstSACB involved in phosphate import. Responsible for energy coupling to the transport system. In Staphylococcus aureus (strain MRSA252), this protein is Phosphate import ATP-binding protein PstB.